Here is a 280-residue protein sequence, read N- to C-terminus: Bifunctional protein FolD (280 aa).

NADP(+) contacts are provided by residues 164–166, serine 189, and valine 230; that span reads GRS.

Belongs to the tetrahydrofolate dehydrogenase/cyclohydrolase family. In terms of assembly, homodimer.

It catalyses the reaction (6R)-5,10-methylene-5,6,7,8-tetrahydrofolate + NADP(+) = (6R)-5,10-methenyltetrahydrofolate + NADPH. The catalysed reaction is (6R)-5,10-methenyltetrahydrofolate + H2O = (6R)-10-formyltetrahydrofolate + H(+). It functions in the pathway one-carbon metabolism; tetrahydrofolate interconversion. Catalyzes the oxidation of 5,10-methylenetetrahydrofolate to 5,10-methenyltetrahydrofolate and then the hydrolysis of 5,10-methenyltetrahydrofolate to 10-formyltetrahydrofolate. This is Bifunctional protein FolD from Geotalea daltonii (strain DSM 22248 / JCM 15807 / FRC-32) (Geobacter daltonii).